We begin with the raw amino-acid sequence, 457 residues long: tRNA modification GTPase MnmE (457 aa).

(6S)-5-formyl-5,6,7,8-tetrahydrofolate is bound by residues arginine 22, glutamate 83, and arginine 122. The TrmE-type G domain occupies 219 to 378 (GLATAIIGRP…LEEAIKTLFF (160 aa)). Asparagine 229 contacts K(+). GTP-binding positions include 229–234 (NVGKSS), 248–254 (TDIAGTT), and 273–276 (DTAG). Serine 233 provides a ligand contact to Mg(2+). K(+) is bound by residues threonine 248, isoleucine 250, and threonine 253. Threonine 254 contacts Mg(2+). Lysine 457 is a (6S)-5-formyl-5,6,7,8-tetrahydrofolate binding site.

The protein belongs to the TRAFAC class TrmE-Era-EngA-EngB-Septin-like GTPase superfamily. TrmE GTPase family. Homodimer. Heterotetramer of two MnmE and two MnmG subunits. It depends on K(+) as a cofactor.

Its subcellular location is the cytoplasm. Functionally, exhibits a very high intrinsic GTPase hydrolysis rate. Involved in the addition of a carboxymethylaminomethyl (cmnm) group at the wobble position (U34) of certain tRNAs, forming tRNA-cmnm(5)s(2)U34. This chain is tRNA modification GTPase MnmE, found in Listeria welshimeri serovar 6b (strain ATCC 35897 / DSM 20650 / CCUG 15529 / CIP 8149 / NCTC 11857 / SLCC 5334 / V8).